A 364-amino-acid chain; its full sequence is UDP-N-acetylglucosamine--N-acetylmuramyl-(pentapeptide) pyrophosphoryl-undecaprenol N-acetylglucosamine transferase (364 aa).

Residues 10–12, Asn123, Ser198, Ile251, and Gln296 each bind UDP-N-acetyl-alpha-D-glucosamine; that span reads TGG.

It belongs to the glycosyltransferase 28 family. MurG subfamily.

The protein resides in the cell membrane. It carries out the reaction di-trans,octa-cis-undecaprenyl diphospho-N-acetyl-alpha-D-muramoyl-L-alanyl-D-glutamyl-meso-2,6-diaminopimeloyl-D-alanyl-D-alanine + UDP-N-acetyl-alpha-D-glucosamine = di-trans,octa-cis-undecaprenyl diphospho-[N-acetyl-alpha-D-glucosaminyl-(1-&gt;4)]-N-acetyl-alpha-D-muramoyl-L-alanyl-D-glutamyl-meso-2,6-diaminopimeloyl-D-alanyl-D-alanine + UDP + H(+). Its pathway is cell wall biogenesis; peptidoglycan biosynthesis. Its function is as follows. Cell wall formation. Catalyzes the transfer of a GlcNAc subunit on undecaprenyl-pyrophosphoryl-MurNAc-pentapeptide (lipid intermediate I) to form undecaprenyl-pyrophosphoryl-MurNAc-(pentapeptide)GlcNAc (lipid intermediate II). This Exiguobacterium sibiricum (strain DSM 17290 / CCUG 55495 / CIP 109462 / JCM 13490 / 255-15) protein is UDP-N-acetylglucosamine--N-acetylmuramyl-(pentapeptide) pyrophosphoryl-undecaprenol N-acetylglucosamine transferase.